Consider the following 62-residue polypeptide: Excisionase (62 aa).

The sequence is that of Excisionase (xis) from Streptomyces ambofaciens.